We begin with the raw amino-acid sequence, 222 residues long: N-(5'-phosphoribosyl)anthranilate isomerase (222 aa).

Belongs to the TrpF family.

It catalyses the reaction N-(5-phospho-beta-D-ribosyl)anthranilate = 1-(2-carboxyphenylamino)-1-deoxy-D-ribulose 5-phosphate. The protein operates within amino-acid biosynthesis; L-tryptophan biosynthesis; L-tryptophan from chorismate: step 3/5. The protein is N-(5'-phosphoribosyl)anthranilate isomerase of Xanthomonas euvesicatoria pv. vesicatoria (strain 85-10) (Xanthomonas campestris pv. vesicatoria).